Consider the following 321-residue polypeptide: Beta-1,3-N-acetylglucosaminyltransferase manic fringe (321 aa).

Residues 1–7 (MQCRLPR) lie on the Cytoplasmic side of the membrane. The chain crosses the membrane as a helical; Signal-anchor for type II membrane protein span at residues 8–27 (GLAGALLTLLCMGLLCLRYH). At 28 to 321 (LNLSPQRVQG…TPWCPQLGAR (294 aa)) the chain is on the lumenal side. R70 contributes to the substrate binding site. N-linked (GlcNAc...) asparagine glycosylation is present at N109. 2 cysteine pairs are disulfide-bonded: C110-C121 and C139-C202. Residue D143 coordinates substrate. D144 contacts Mn(2+). N-linked (GlcNAc...) asparagine glycosylation is present at N185. D232 is an active-site residue. Mn(2+) is bound at residue H256. Residues C306 and C315 are joined by a disulfide bond.

The protein belongs to the glycosyltransferase 31 family. Mn(2+) serves as cofactor.

The protein resides in the golgi apparatus membrane. It carries out the reaction 3-O-(alpha-L-fucosyl)-L-threonyl-[EGF-like domain protein] + UDP-N-acetyl-alpha-D-glucosamine = 3-O-(N-acetyl-beta-D-glucosaminyl-(1-&gt;3)-alpha-L-fucosyl)-L-threonyl-[EGF-like domain protein] + UDP + H(+). The enzyme catalyses 3-O-(alpha-L-fucosyl)-L-seryl-[EGF-like domain protein] + UDP-N-acetyl-alpha-D-glucosamine = 3-O-(N-acetyl-beta-D-glucosaminyl-(1-&gt;3)-alpha-L-fucosyl)-L-seryl-[EGF-like domain protein] + UDP + H(+). Glycosyltransferase that initiates the elongation of O-linked fucose residues attached to EGF-like repeats in the extracellular domain of Notch molecules. Modulates NOTCH1 activity by modifying O-fucose residues at specific EGF-like domains resulting in inhibition of NOTCH1 activation by JAG1 and enhancement of NOTCH1 activation by DLL1 via an increase in its binding to DLL1. This is Beta-1,3-N-acetylglucosaminyltransferase manic fringe from Homo sapiens (Human).